Reading from the N-terminus, the 91-residue chain is Small ribosomal subunit protein bS20 (91 aa).

The span at 1–21 (MPLHKSAEKRLRQSARRNERN) shows a compositional bias: basic and acidic residues. Disordered regions lie at residues 1 to 25 (MPLH…RARK) and 71 to 91 (NKAS…AQKD).

It belongs to the bacterial ribosomal protein bS20 family.

Binds directly to 16S ribosomal RNA. This chain is Small ribosomal subunit protein bS20, found in Prosthecochloris aestuarii (strain DSM 271 / SK 413).